Here is a 291-residue protein sequence, read N- to C-terminus: m-AAA protease-interacting protein 1, mitochondrial (291 aa).

The transit peptide at 1-96 (MALAARLLPL…SLPASPIRSY (96 aa)) directs the protein to the mitochondrion.

Interacts with AFG3L2. Interacts with SPG7. Interacts with SMDT1/EMRE (via the N-terminal transit peptide); interaction is direct and takes place before maturation of SMDT1/EMRE.

It is found in the mitochondrion matrix. Its function is as follows. Promotes sorting of SMDT1/EMRE in mitochondria by ensuring its maturation. Interacts with the transit peptide region of SMDT1/EMRE precursor protein in the mitochondrial matrix, leading to protect it against protein degradation by YME1L1, thereby ensuring SMDT1/EMRE maturation by the mitochondrial processing peptidase (PMPCA and PMPCB). The polypeptide is m-AAA protease-interacting protein 1, mitochondrial (Rattus norvegicus (Rat)).